The following is a 317-amino-acid chain: Ribosomal RNA large subunit methyltransferase F (317 aa).

Belongs to the methyltransferase superfamily. METTL16/RlmF family.

It localises to the cytoplasm. It catalyses the reaction adenosine(1618) in 23S rRNA + S-adenosyl-L-methionine = N(6)-methyladenosine(1618) in 23S rRNA + S-adenosyl-L-homocysteine + H(+). Its function is as follows. Specifically methylates the adenine in position 1618 of 23S rRNA. The protein is Ribosomal RNA large subunit methyltransferase F of Pseudomonas putida (strain ATCC 700007 / DSM 6899 / JCM 31910 / BCRC 17059 / LMG 24140 / F1).